The sequence spans 378 residues: MNALKTTHDAKAPIVAFDMTPATLRELGLQESDVPEVHAVAQRIEVGSPQTVAEFGRDVAEHTSRYADSLLDQVRNSDLDEAGEKLTQVVAKARSLNVGPLSDNRSRLPLIGPLIDRFRVRSTGFMARFDTTREQIEHLVSEVQTTQQGIAQRNASLDEMFAAVREEHRLLGVHIAAGKVRLAELREQAEGLRGNVGNDPGRVQELADLDAMVANLDKRIGDLIALQHSAMQSLPTIRMIQANNQMLVDKFHTIREITVPAWKRQFMLALSLNEQKNAVELATAIDDTTNDLMKRNAALLHRTSVETAKENQRLVIDVDTLKQVQTTLIKTVEDVIRIQQEGVQKRKDAEKQIAAMRGDLQAKLTRQPVRELAQQESV.

It belongs to the TelA family.

Belongs to the kla operon, which is associated with cryptic tellurite resistance, and IncW plasmid fertility inhibition. In Escherichia coli, this protein is Protein KlaB (klaB).